A 463-amino-acid chain; its full sequence is Adenosylhomocysteinase (463 aa).

3 residues coordinate substrate: Thr54, Asp128, and Glu189. An NAD(+)-binding site is contributed by 190–192 (TTT). Lys219 and Asp223 together coordinate substrate. Residues Asn224, 253 to 258 (GYGDVG), Glu276, Asn311, 332 to 334 (IGH), and Asn377 each bind NAD(+).

This sequence belongs to the adenosylhomocysteinase family. NAD(+) is required as a cofactor.

It is found in the cytoplasm. The catalysed reaction is S-adenosyl-L-homocysteine + H2O = L-homocysteine + adenosine. Its pathway is amino-acid biosynthesis; L-homocysteine biosynthesis; L-homocysteine from S-adenosyl-L-homocysteine: step 1/1. Its function is as follows. May play a key role in the regulation of the intracellular concentration of adenosylhomocysteine. This chain is Adenosylhomocysteinase, found in Cereibacter sphaeroides (Rhodobacter sphaeroides).